A 344-amino-acid polypeptide reads, in one-letter code: tRNA N6-adenosine threonylcarbamoyltransferase (344 aa).

Fe cation-binding residues include His-113 and His-117. Substrate contacts are provided by residues 135 to 139, Asp-169, Gly-182, Asp-186, and Asn-278; that span reads LVSGG. Residue Asp-306 coordinates Fe cation. The tract at residues 325 to 344 is disordered; sequence ESPISVGTDPSLSVETPQVF. Residues 326-344 are compositionally biased toward polar residues; sequence SPISVGTDPSLSVETPQVF.

The protein belongs to the KAE1 / TsaD family. The cofactor is Fe(2+).

It is found in the cytoplasm. It carries out the reaction L-threonylcarbamoyladenylate + adenosine(37) in tRNA = N(6)-L-threonylcarbamoyladenosine(37) in tRNA + AMP + H(+). In terms of biological role, required for the formation of a threonylcarbamoyl group on adenosine at position 37 (t(6)A37) in tRNAs that read codons beginning with adenine. Is involved in the transfer of the threonylcarbamoyl moiety of threonylcarbamoyl-AMP (TC-AMP) to the N6 group of A37, together with TsaE and TsaB. TsaD likely plays a direct catalytic role in this reaction. This is tRNA N6-adenosine threonylcarbamoyltransferase from Corynebacterium glutamicum (strain R).